The following is a 282-amino-acid chain: 2-dehydro-3-deoxyphosphooctonate aldolase (282 aa).

It belongs to the KdsA family.

It is found in the cytoplasm. The enzyme catalyses D-arabinose 5-phosphate + phosphoenolpyruvate + H2O = 3-deoxy-alpha-D-manno-2-octulosonate-8-phosphate + phosphate. Its pathway is carbohydrate biosynthesis; 3-deoxy-D-manno-octulosonate biosynthesis; 3-deoxy-D-manno-octulosonate from D-ribulose 5-phosphate: step 2/3. It participates in bacterial outer membrane biogenesis; lipopolysaccharide biosynthesis. This chain is 2-dehydro-3-deoxyphosphooctonate aldolase, found in Shewanella pealeana (strain ATCC 700345 / ANG-SQ1).